The chain runs to 212 residues: Tubulin alpha chain (212 aa).

Residues Asn3 and Asn25 each coordinate GTP. Residue Glu51 is part of the active site.

The protein belongs to the tubulin family. As to quaternary structure, dimer of alpha and beta chains. A typical microtubule is a hollow water-filled tube with an outer diameter of 25 nm and an inner diameter of 15 nM. Alpha-beta heterodimers associate head-to-tail to form protofilaments running lengthwise along the microtubule wall with the beta-tubulin subunit facing the microtubule plus end conferring a structural polarity. Microtubules usually have 13 protofilaments but different protofilament numbers can be found in some organisms and specialized cells. The cofactor is Mg(2+).

The protein localises to the cytoplasm. It is found in the cytoskeleton. The enzyme catalyses GTP + H2O = GDP + phosphate + H(+). In terms of biological role, tubulin is the major constituent of microtubules, a cylinder consisting of laterally associated linear protofilaments composed of alpha- and beta-tubulin heterodimers. Microtubules grow by the addition of GTP-tubulin dimers to the microtubule end, where a stabilizing cap forms. Below the cap, tubulin dimers are in GDP-bound state, owing to GTPase activity of alpha-tubulin. The polypeptide is Tubulin alpha chain (TUB-A) (Pneumocystis carinii).